The primary structure comprises 380 residues: Erythronate-4-phosphate dehydrogenase (380 aa).

The substrate site is built by S45 and T66. Residues 126–127 (QV), D146, T174, 205–207 (ASR), and D231 each bind NAD(+). R207 is a catalytic residue. Residue E236 is part of the active site. H253 (proton donor) is an active-site residue. NAD(+) is bound at residue G256. Y257 serves as a coordination point for substrate.

This sequence belongs to the D-isomer specific 2-hydroxyacid dehydrogenase family. PdxB subfamily. Homodimer.

It localises to the cytoplasm. It catalyses the reaction 4-phospho-D-erythronate + NAD(+) = (R)-3-hydroxy-2-oxo-4-phosphooxybutanoate + NADH + H(+). Its pathway is cofactor biosynthesis; pyridoxine 5'-phosphate biosynthesis; pyridoxine 5'-phosphate from D-erythrose 4-phosphate: step 2/5. In terms of biological role, catalyzes the oxidation of erythronate-4-phosphate to 3-hydroxy-2-oxo-4-phosphonooxybutanoate. This Pseudomonas syringae pv. tomato (strain ATCC BAA-871 / DC3000) protein is Erythronate-4-phosphate dehydrogenase.